Consider the following 177-residue polypeptide: uncharacterized protein (177 aa).

To M.jannaschii MJ0628.

This is an uncharacterized protein from Methanocaldococcus jannaschii (strain ATCC 43067 / DSM 2661 / JAL-1 / JCM 10045 / NBRC 100440) (Methanococcus jannaschii).